Here is a 542-residue protein sequence, read N- to C-terminus: Polysialoglycoprotein (542 aa).

A signal peptide spans 1–21; that stretch reads MIMGGVRELLLVVMTVGVVKV. Residues 22-120 constitute a propeptide that is removed on maturation; it reads SCYPVGKSQK…TSEAATGPSG (99 aa). The tract at residues 70 to 542 is disordered; it reads EEYLETNEVE…GPSGDDAMDI (473 aa). The segment covering 78–95 has biased composition (polar residues); that stretch reads VESQASPNHGSSPANDAL. Over residues 97–106 the composition is skewed to basic and acidic residues; the sequence is SEEKLRRVSS. The segment covering 107 to 116 has biased composition (low complexity); that stretch reads DDAATSEAAT. A run of 32 repeats spans residues 121–133, 134–146, 147–159, 160–172, 173–185, 186–198, 199–211, 212–224, 225–237, 238–250, 251–263, 264–276, 277–289, 290–302, 303–315, 316–328, 329–341, 342–354, 355–367, 368–380, 381–393, 394–406, 407–419, 420–432, 433–445, 446–458, 459–471, 472–484, 485–497, 498–510, 511–523, and 524–536. The tract at residues 121-536 is 32 X 13 AA tandem repeats of D-D-A-T-S-E-A-A-T-G-P-S-G; that stretch reads DDATSEAATG…TSEAATGPSG (416 aa). O-linked (GalNAc...) threonine glycosylation occurs at T124. O-linked (GalNAc...) serine glycosylation is present at S125. O-linked (GalNAc...) threonine glycans are attached at residues T129 and T137. O-linked (GalNAc...) serine glycosylation occurs at S138. 2 O-linked (GalNAc...) threonine glycosylation sites follow: T142 and T150. O-linked (GalNAc...) serine glycosylation occurs at S151. O-linked (GalNAc...) threonine glycosylation is found at T155 and T163. A glycan (O-linked (GalNAc...) serine) is linked at S164. O-linked (GalNAc...) threonine glycans are attached at residues T168 and T176. S177 carries an O-linked (GalNAc...) serine glycan. T181 and T189 each carry an O-linked (GalNAc...) threonine glycan. S190 carries an O-linked (GalNAc...) serine glycan. O-linked (GalNAc...) threonine glycosylation is found at T194 and T202. The O-linked (GalNAc...) serine glycan is linked to S203. O-linked (GalNAc...) threonine glycosylation is found at T207 and T215. Residue S216 is glycosylated (O-linked (GalNAc...) serine). 2 O-linked (GalNAc...) threonine glycosylation sites follow: T220 and T228. A glycan (O-linked (GalNAc...) serine) is linked at S229. O-linked (GalNAc...) threonine glycosylation is found at T233 and T241. O-linked (GalNAc...) serine glycosylation occurs at S242. O-linked (GalNAc...) threonine glycosylation is found at T246 and T254. O-linked (GalNAc...) serine glycosylation occurs at S255. Residues T259 and T267 are each glycosylated (O-linked (GalNAc...) threonine). S268 carries an O-linked (GalNAc...) serine glycan. O-linked (GalNAc...) threonine glycans are attached at residues T272 and T280. O-linked (GalNAc...) serine glycosylation is present at S281. T285 and T293 each carry an O-linked (GalNAc...) threonine glycan. S294 carries an O-linked (GalNAc...) serine glycan. O-linked (GalNAc...) threonine glycosylation is found at T298 and T306. O-linked (GalNAc...) serine glycosylation is present at S307. Residues T311 and T319 are each glycosylated (O-linked (GalNAc...) threonine). O-linked (GalNAc...) serine glycosylation is present at S320. Residues T324 and T332 are each glycosylated (O-linked (GalNAc...) threonine). S333 carries an O-linked (GalNAc...) serine glycan. T337 and T345 each carry an O-linked (GalNAc...) threonine glycan. S346 carries an O-linked (GalNAc...) serine glycan. O-linked (GalNAc...) threonine glycans are attached at residues T350 and T358. S359 is a glycosylation site (O-linked (GalNAc...) serine). Residues T363 and T371 are each glycosylated (O-linked (GalNAc...) threonine). S372 carries O-linked (GalNAc...) serine glycosylation. O-linked (GalNAc...) threonine glycans are attached at residues T376 and T384. A glycan (O-linked (GalNAc...) serine) is linked at S385. O-linked (GalNAc...) threonine glycans are attached at residues T389 and T397. S398 carries an O-linked (GalNAc...) serine glycan. O-linked (GalNAc...) threonine glycans are attached at residues T402 and T410. S411 carries an O-linked (GalNAc...) serine glycan. O-linked (GalNAc...) threonine glycosylation is found at T415 and T423. O-linked (GalNAc...) serine glycosylation is present at S424. Residues T428 and T436 are each glycosylated (O-linked (GalNAc...) threonine). O-linked (GalNAc...) serine glycosylation occurs at S437. Residues T441 and T449 are each glycosylated (O-linked (GalNAc...) threonine). Residue S450 is glycosylated (O-linked (GalNAc...) serine). 2 O-linked (GalNAc...) threonine glycosylation sites follow: T454 and T462. The O-linked (GalNAc...) serine glycan is linked to S463. O-linked (GalNAc...) threonine glycans are attached at residues T467 and T475. O-linked (GalNAc...) serine glycosylation occurs at S476. O-linked (GalNAc...) threonine glycans are attached at residues T480 and T488. An O-linked (GalNAc...) serine glycan is attached at S489. Residues T493 and T501 are each glycosylated (O-linked (GalNAc...) threonine). S502 carries an O-linked (GalNAc...) serine glycan. T506 and T514 each carry an O-linked (GalNAc...) threonine glycan. Residue S515 is glycosylated (O-linked (GalNAc...) serine). Residues T519 and T527 are each glycosylated (O-linked (GalNAc...) threonine). The O-linked (GalNAc...) serine glycan is linked to S528. Residue T532 is glycosylated (O-linked (GalNAc...) threonine). Positions 537-542 are excised as a propeptide; it reads DDAMDI.

In terms of processing, most sialic acid residues exist in the form of polysialyl groups partly capped with deaminoneuraminic acid. In terms of tissue distribution, cortical alveoli of immature ovaries.

Functionally, in response to egg activation, PSGP is discharged by exocytosis into the perivitelline space, where it undergoes rapid proteolysis into glycotridecapeptides. During fertilization and/or early development the glycotridecapeptides prevent polyspermy or are involved in the formation of a fertilization membrane. The protein is Polysialoglycoprotein of Oncorhynchus mykiss (Rainbow trout).